Consider the following 359-residue polypeptide: MSSILSRYPEAETPVHGYFYSMVELAVVRVFVQHEIFDAIADDGTSIEELATKTGMEMNLLERLSNFLIASKVLSSPKPGFIGLPAETKMFQQRRAKLFYSHIFDAFMGSAVKWPQYLQTNGLAEPQKSNRSPFGLGAGYPDKSFYDVLDMMPERAQAFNSTMAIGLGDMPITGIYDFSWVTAHAGTDPKRTLIVDVGGGKGQAIKAIIEETPSIPASACVLQDLPNVIKDTPEEDGILRKVQKVGSSFFDKQSTRGALVYYIRRVLNDWPDDECVTILKNIREACASDSRLLISENLLPDEPSVSLAAADLWMMNFAGKRRNVRMFNDLASRSGFEISSIAKDKMSNSAVIEMLPVQS.

S-adenosyl-L-methionine is bound by residues 198–199 (GG), Asp224, 248–249 (SF), Arg264, and Arg265.

It belongs to the class I-like SAM-binding methyltransferase superfamily. Cation-independent O-methyltransferase family.

The catalysed reaction is trichosetin + S-adenosyl-L-methionine = equisetin + S-adenosyl-L-homocysteine + H(+). Its pathway is mycotoxin biosynthesis. In terms of biological role, methyltransferase; part of the gene cluster that mediates the biosynthesis of equisetin, a trans-fused decalin-containing tetramic acid with antimicrobial activity. The PKS module of eqxS together with the enoylreductase eqxC catalyze the formation of the polyketide unit which is then conjugated to L-serine by the condensation domain of the eqxS NRPS module. Activity of the Dieckmann cyclase domain (RED) results in release of the Dieckmann product intermediate. Diels-Alderase eqx3 is involved in endo-selective Diels-Alder cycloaddition to form the decalin ring, leading to the production of N-desmethylequisetin also called trichosetin. Subsequent N-methylation is carried out by eqxD to give equisetin. The protein is Methyltransferase eqxD of Fusarium heterosporum.